We begin with the raw amino-acid sequence, 247 residues long: Carboxy-S-adenosyl-L-methionine synthase (247 aa).

Residues Tyr39, 64 to 66, 89 to 90, 117 to 118, Asn132, and Arg199 contribute to the S-adenosyl-L-methionine site; these read GCS, DN, and DI.

Belongs to the class I-like SAM-binding methyltransferase superfamily. Cx-SAM synthase family. Homodimer.

The enzyme catalyses prephenate + S-adenosyl-L-methionine = carboxy-S-adenosyl-L-methionine + 3-phenylpyruvate + H2O. Catalyzes the conversion of S-adenosyl-L-methionine (SAM) to carboxy-S-adenosyl-L-methionine (Cx-SAM). The polypeptide is Carboxy-S-adenosyl-L-methionine synthase (Salmonella paratyphi B (strain ATCC BAA-1250 / SPB7)).